The sequence spans 362 residues: Probable secreted beta-glucosidase UTH1 (362 aa).

Positions 1 to 17 (MKLSALLALSASTAVLA) are cleaved as a signal peptide.

The protein belongs to the SUN family.

The protein resides in the mitochondrion outer membrane. It is found in the secreted. Its subcellular location is the cell wall. In terms of biological role, involved in aging, oxidative stress response, and in the regulation of mitochondrial biogenesis. Inactivation of UTH1 increases life span, leads to higher resistance to heat stress and to hydrogen peroxide, and increases sensitivity to the superoxide radical-generating drug paraquat and to copper. Also required for the selective autophagic degradation of mitochondria (mitophagy) in response to nitrogen starvation. Involved in the remodeling of the cell wall during the various phases of yeast culture development and under various environmental conditions and plays a role in septation. Involved in cell sensitivity to boric acid. This chain is Probable secreted beta-glucosidase UTH1 (UTH1), found in Saccharomyces cerevisiae (strain RM11-1a) (Baker's yeast).